Consider the following 229-residue polypeptide: Large ribosomal subunit protein uL1 (229 aa).

The protein belongs to the universal ribosomal protein uL1 family. As to quaternary structure, part of the 50S ribosomal subunit.

In terms of biological role, binds directly to 23S rRNA. The L1 stalk is quite mobile in the ribosome, and is involved in E site tRNA release. Its function is as follows. Protein L1 is also a translational repressor protein, it controls the translation of the L11 operon by binding to its mRNA. The chain is Large ribosomal subunit protein uL1 from Rhodopseudomonas palustris (strain BisB5).